The chain runs to 139 residues: Protein shisa-5 (139 aa).

The chain crosses the membrane as a helical span at residues 3–23 (FGTLVAIGVIVFAVVVITIIL).

This sequence belongs to the shisa family.

It is found in the endoplasmic reticulum membrane. Its subcellular location is the nucleus membrane. In terms of biological role, can induce apoptosis in a caspase-dependent manner and plays a role in p53/TP53-dependent apoptosis. The protein is Protein shisa-5 (Shisa5) of Gallus gallus (Chicken).